We begin with the raw amino-acid sequence, 252 residues long: 2-succinyl-6-hydroxy-2,4-cyclohexadiene-1-carboxylate synthase (252 aa).

The protein belongs to the AB hydrolase superfamily. MenH family. As to quaternary structure, monomer.

It carries out the reaction 5-enolpyruvoyl-6-hydroxy-2-succinyl-cyclohex-3-ene-1-carboxylate = (1R,6R)-6-hydroxy-2-succinyl-cyclohexa-2,4-diene-1-carboxylate + pyruvate. Its pathway is quinol/quinone metabolism; 1,4-dihydroxy-2-naphthoate biosynthesis; 1,4-dihydroxy-2-naphthoate from chorismate: step 3/7. It functions in the pathway quinol/quinone metabolism; menaquinone biosynthesis. Functionally, catalyzes a proton abstraction reaction that results in 2,5-elimination of pyruvate from 2-succinyl-5-enolpyruvyl-6-hydroxy-3-cyclohexene-1-carboxylate (SEPHCHC) and the formation of 2-succinyl-6-hydroxy-2,4-cyclohexadiene-1-carboxylate (SHCHC). This is 2-succinyl-6-hydroxy-2,4-cyclohexadiene-1-carboxylate synthase from Escherichia coli O8 (strain IAI1).